A 204-amino-acid polypeptide reads, in one-letter code: N-(5'-phosphoribosyl)anthranilate isomerase (204 aa).

It belongs to the TrpF family.

The enzyme catalyses N-(5-phospho-beta-D-ribosyl)anthranilate = 1-(2-carboxyphenylamino)-1-deoxy-D-ribulose 5-phosphate. It functions in the pathway amino-acid biosynthesis; L-tryptophan biosynthesis; L-tryptophan from chorismate: step 3/5. This chain is N-(5'-phosphoribosyl)anthranilate isomerase, found in Bacillus anthracis (strain A0248).